A 448-amino-acid polypeptide reads, in one-letter code: Adenylosuccinate synthetase 1 (448 aa).

Residues 22-28 (GDEGKGK) and 50-52 (GHT) contribute to the GTP site. Residue D23 is the Proton acceptor of the active site. The Mg(2+) site is built by D23 and G50. IMP is bound by residues 23-26 (DEGK), 48-51 (NAGH), T139, R153, Q234, T249, and R321. H51 functions as the Proton donor in the catalytic mechanism. A substrate-binding site is contributed by 317–323 (SVTGRPR). GTP-binding positions include R323, 349–351 (KLD), and 431–433 (STG).

This sequence belongs to the adenylosuccinate synthetase family. As to quaternary structure, homodimer. Mg(2+) serves as cofactor.

Its subcellular location is the cytoplasm. The catalysed reaction is IMP + L-aspartate + GTP = N(6)-(1,2-dicarboxyethyl)-AMP + GDP + phosphate + 2 H(+). Its pathway is purine metabolism; AMP biosynthesis via de novo pathway; AMP from IMP: step 1/2. In terms of biological role, plays an important role in the de novo pathway of purine nucleotide biosynthesis. Catalyzes the first committed step in the biosynthesis of AMP from IMP. In Burkholderia lata (strain ATCC 17760 / DSM 23089 / LMG 22485 / NCIMB 9086 / R18194 / 383), this protein is Adenylosuccinate synthetase 1.